A 76-amino-acid polypeptide reads, in one-letter code: UPF0291 protein BCE_1981 (76 aa).

This sequence belongs to the UPF0291 family.

The protein resides in the cytoplasm. This is UPF0291 protein BCE_1981 from Bacillus cereus (strain ATCC 10987 / NRS 248).